The primary structure comprises 696 residues: Polyribonucleotide nucleotidyltransferase (696 aa).

Residues Asp-486 and Asp-492 each coordinate Mg(2+). The KH domain occupies 553–612; that stretch reads PRIIVRNIPKDRIGELIGPGGKNVRGISELTGAELYIEDDGRVTISGSNQESAEKAAKMV. Positions 622 to 690 constitute an S1 motif domain; the sequence is GKIYEGKVKR…KTGKIDLSRK (69 aa).

This sequence belongs to the polyribonucleotide nucleotidyltransferase family. Requires Mg(2+) as cofactor.

The protein localises to the cytoplasm. It carries out the reaction RNA(n+1) + phosphate = RNA(n) + a ribonucleoside 5'-diphosphate. Involved in mRNA degradation. Catalyzes the phosphorolysis of single-stranded polyribonucleotides processively in the 3'- to 5'-direction. The protein is Polyribonucleotide nucleotidyltransferase of Leptospira borgpetersenii serovar Hardjo-bovis (strain L550).